Here is a 280-residue protein sequence, read N- to C-terminus: 2-C-methyl-D-erythritol 4-phosphate cytidylyltransferase (280 aa).

This sequence belongs to the IspD/TarI cytidylyltransferase family. IspD subfamily.

It carries out the reaction 2-C-methyl-D-erythritol 4-phosphate + CTP + H(+) = 4-CDP-2-C-methyl-D-erythritol + diphosphate. It participates in isoprenoid biosynthesis; isopentenyl diphosphate biosynthesis via DXP pathway; isopentenyl diphosphate from 1-deoxy-D-xylulose 5-phosphate: step 2/6. Catalyzes the formation of 4-diphosphocytidyl-2-C-methyl-D-erythritol from CTP and 2-C-methyl-D-erythritol 4-phosphate (MEP). This chain is 2-C-methyl-D-erythritol 4-phosphate cytidylyltransferase, found in Psychrobacter cryohalolentis (strain ATCC BAA-1226 / DSM 17306 / VKM B-2378 / K5).